We begin with the raw amino-acid sequence, 504 residues long: MAKIDFRNKINWRRRFRSPPRVETERDILRIFESDRGRIVNSPAIRRLQQKTQVFPLERNAAVRTRLTHSLEVQQVGRYIAKEVLSRLKEQKLLEEYGLEELTGPFESVVEMACLMHDIGNPPFGHFGEAAINDWFRQRLAPGDALGQPLTDDRCEVQALRLHEGETALNALRRKVRQDLCSFEGNAQGIRLVHTLMRMNLTWAQVGCILKYTRPAWWFEATPASHSYLMKKPGYYLAEEEYVARLRKELDLAPYNRFPLTWIMEAADDISYCVADLEDAVEKRIFSAEQLYQHLYDAWGNHEKGSLFSQVVENAWEKSRANYLRQSAEDQFFMYLRVNTLNKLVPYAARRFIDNLPAIFTGDFNHALLEDDSDCSQLLELYKNVAMKQVFSHPDVEQLELQGYRVISGLLDIYQPLLKLSLEDFSELVAQERVRRLPIASRLYQKLSTRHRLAYVEAVNKLVRTAPEFALMEYYYRCRLIQDYISGMTDLYAWDEYRRLMAVE.

An HD domain is found at 66–273 (RLTHSLEVQQ…MEAADDISYC (208 aa)).

Belongs to the dGTPase family. Type 1 subfamily. In terms of assembly, homotetramer. Mg(2+) is required as a cofactor.

The catalysed reaction is dGTP + H2O = 2'-deoxyguanosine + triphosphate + H(+). Functionally, dGTPase preferentially hydrolyzes dGTP over the other canonical NTPs. This Klebsiella pneumoniae (strain 342) protein is Deoxyguanosinetriphosphate triphosphohydrolase.